A 193-amino-acid chain; its full sequence is Potassium-transporting ATPase KdpC subunit (193 aa).

Residues 14–34 (ITFTFLVLCGLVYPLIVTGIA) traverse the membrane as a helical segment.

The protein belongs to the KdpC family. As to quaternary structure, the system is composed of three essential subunits: KdpA, KdpB and KdpC.

Its subcellular location is the cell membrane. Its function is as follows. Part of the high-affinity ATP-driven potassium transport (or Kdp) system, which catalyzes the hydrolysis of ATP coupled with the electrogenic transport of potassium into the cytoplasm. This subunit acts as a catalytic chaperone that increases the ATP-binding affinity of the ATP-hydrolyzing subunit KdpB by the formation of a transient KdpB/KdpC/ATP ternary complex. The chain is Potassium-transporting ATPase KdpC subunit from Bacillus anthracis (strain A0248).